A 275-amino-acid chain; its full sequence is MELWFTEKQTKHFGITARINRTLHTEQTEFQKLDMVETEEFGNMLILDGMVMTTEKDEFVYHEMVAHVPLFTHPNPENVLIVGGGDGGVIREVLKHPSVKKATLVEIDGKVIEYSKQYLPSIAGALDNERVEVKVGDGFLHIAESENEYDVIMVDSTEPVGPAVNLFTKGFYAGISKALKEDGIFVAQTDNPWFTPELITTVFKDVKEIFPITRLYTANIPTYPSGLWTFTIGSKKHDPLEVIEERFHEIETKYYTKELHNAAFALPKFVGDLIK.

The PABS domain occupies 2 to 235 (ELWFTEKQTK…GLWTFTIGSK (234 aa)). Position 31 (Gln-31) interacts with S-methyl-5'-thioadenosine. Positions 62 and 86 each coordinate spermidine. S-methyl-5'-thioadenosine contacts are provided by residues Glu-106 and 137–138 (DG). The active-site Proton acceptor is the Asp-155. 155 to 158 (DSTE) serves as a coordination point for spermidine. Pro-162 contacts S-methyl-5'-thioadenosine.

It belongs to the spermidine/spermine synthase family. In terms of assembly, homodimer or homotetramer.

The protein localises to the cytoplasm. It carries out the reaction S-adenosyl 3-(methylsulfanyl)propylamine + putrescine = S-methyl-5'-thioadenosine + spermidine + H(+). It functions in the pathway amine and polyamine biosynthesis; spermidine biosynthesis; spermidine from putrescine: step 1/1. Catalyzes the irreversible transfer of a propylamine group from the amino donor S-adenosylmethioninamine (decarboxy-AdoMet) to putrescine (1,4-diaminobutane) to yield spermidine. This is Polyamine aminopropyltransferase 1 from Bacillus cereus (strain ATCC 14579 / DSM 31 / CCUG 7414 / JCM 2152 / NBRC 15305 / NCIMB 9373 / NCTC 2599 / NRRL B-3711).